Consider the following 177-residue polypeptide: ADP-ribosylation factor-like protein 3 (177 aa).

A lipid anchor (N-myristoyl glycine) is attached at G2. Residues 23–31, 125–128, and A159 each bind GTP; these read GLDNAGKTT and NKQD.

Belongs to the small GTPase superfamily. Arf family.

The protein resides in the golgi apparatus membrane. It is found in the cytoplasm. Its subcellular location is the cytoskeleton. It localises to the spindle. The protein localises to the nucleus. The protein resides in the microtubule organizing center. Functionally, small GTP-binding protein which cycles between an inactive GDP-bound and an active GTP-bound form, and the rate of cycling is regulated by guanine nucleotide exchange factors (GEF) and GTPase-activating proteins (GAP). Required for normal cytokinesis and cilia signaling. Required for targeting proteins to the ciliary membrane by releasing myristoylated protein from unc119 cargo adapters into the cilium. In Chlamydomonas reinhardtii (Chlamydomonas smithii), this protein is ADP-ribosylation factor-like protein 3.